A 485-amino-acid polypeptide reads, in one-letter code: D-alanine--D-alanyl carrier protein ligase (485 aa).

144–145 lines the ATP pocket; it reads TS. Position 189 (Asp-189) interacts with D-alanine. 284–289 contacts ATP; the sequence is NTYGPT. Val-293 serves as a coordination point for D-alanine. ATP contacts are provided by Asp-365 and Lys-473. Lys-473 provides a ligand contact to D-alanine.

Belongs to the ATP-dependent AMP-binding enzyme family. DltA subfamily.

It localises to the cytoplasm. The catalysed reaction is holo-[D-alanyl-carrier protein] + D-alanine + ATP = D-alanyl-[D-alanyl-carrier protein] + AMP + diphosphate. The protein operates within cell wall biogenesis; lipoteichoic acid biosynthesis. Its function is as follows. Catalyzes the first step in the D-alanylation of lipoteichoic acid (LTA), the activation of D-alanine and its transfer onto the D-alanyl carrier protein (Dcp) DltC. In an ATP-dependent two-step reaction, forms a high energy D-alanyl-AMP intermediate, followed by transfer of the D-alanyl residue as a thiol ester to the phosphopantheinyl prosthetic group of the Dcp. D-alanylation of LTA plays an important role in modulating the properties of the cell wall in Gram-positive bacteria, influencing the net charge of the cell wall. This chain is D-alanine--D-alanyl carrier protein ligase, found in Staphylococcus aureus (strain bovine RF122 / ET3-1).